The sequence spans 204 residues: Signal peptidase I (204 aa).

Over 1 to 10 the chain is Cytoplasmic; the sequence is MNLFKNFLKE. A helical transmembrane segment spans residues 11-30; the sequence is WGLFLLILSLLALSRIFFWS. The Extracellular segment spans residues 31–204; the sequence is NVRVEGHSMD…FWPITRIGTF (174 aa). Residues Ser-38 and Lys-76 contribute to the active site.

This sequence belongs to the peptidase S26 family.

The protein resides in the cell membrane. The catalysed reaction is Cleavage of hydrophobic, N-terminal signal or leader sequences from secreted and periplasmic proteins.. This is Signal peptidase I (lepB) from Streptococcus pneumoniae (strain ATCC BAA-255 / R6).